The chain runs to 140 residues: Oocyte zinc finger protein XlCOF15 (140 aa).

5 C2H2-type zinc fingers span residues 6–28 (FTCK…QKIH), 34–56 (FTCT…QKVH), 62–84 (FICT…HVIH), 90–112 (FTCA…RAAH), and 118–140 (FICT…LKSH).

Belongs to the krueppel C2H2-type zinc-finger protein family.

The protein localises to the nucleus. Functionally, may be involved in transcriptional regulation. This Xenopus laevis (African clawed frog) protein is Oocyte zinc finger protein XlCOF15.